The primary structure comprises 372 residues: 4-hydroxy-3-methylbut-2-en-1-yl diphosphate synthase (flavodoxin) (372 aa).

Residues cysteine 270, cysteine 273, cysteine 305, and glutamate 312 each contribute to the [4Fe-4S] cluster site.

The protein belongs to the IspG family. The cofactor is [4Fe-4S] cluster.

The enzyme catalyses (2E)-4-hydroxy-3-methylbut-2-enyl diphosphate + oxidized [flavodoxin] + H2O + 2 H(+) = 2-C-methyl-D-erythritol 2,4-cyclic diphosphate + reduced [flavodoxin]. It functions in the pathway isoprenoid biosynthesis; isopentenyl diphosphate biosynthesis via DXP pathway; isopentenyl diphosphate from 1-deoxy-D-xylulose 5-phosphate: step 5/6. Its function is as follows. Converts 2C-methyl-D-erythritol 2,4-cyclodiphosphate (ME-2,4cPP) into 1-hydroxy-2-methyl-2-(E)-butenyl 4-diphosphate. This is 4-hydroxy-3-methylbut-2-en-1-yl diphosphate synthase (flavodoxin) from Vibrio parahaemolyticus serotype O3:K6 (strain RIMD 2210633).